The chain runs to 186 residues: Elongation factor P (186 aa).

Belongs to the elongation factor P family.

It localises to the cytoplasm. Its pathway is protein biosynthesis; polypeptide chain elongation. In terms of biological role, involved in peptide bond synthesis. Stimulates efficient translation and peptide-bond synthesis on native or reconstituted 70S ribosomes in vitro. Probably functions indirectly by altering the affinity of the ribosome for aminoacyl-tRNA, thus increasing their reactivity as acceptors for peptidyl transferase. In Streptococcus agalactiae serotype Ia (strain ATCC 27591 / A909 / CDC SS700), this protein is Elongation factor P.